A 520-amino-acid polypeptide reads, in one-letter code: Mu-like prophage FluMu protein gp29 (520 aa).

The protein to phage Mu protein gp29.

The sequence is that of Mu-like prophage FluMu protein gp29 from Haemophilus influenzae (strain ATCC 51907 / DSM 11121 / KW20 / Rd).